Reading from the N-terminus, the 330-residue chain is Cobalamin biosynthesis protein CobD (330 aa).

4 consecutive transmembrane segments (helical) span residues 60 to 80 (TLVI…PPIV), 153 to 173 (GIIA…LLGV), 227 to 247 (LGIV…WKIF), and 308 to 328 (IVLF…FVLT).

The protein belongs to the CobD/CbiB family.

Its subcellular location is the cell membrane. It functions in the pathway cofactor biosynthesis; adenosylcobalamin biosynthesis. Functionally, converts cobyric acid to cobinamide by the addition of aminopropanol on the F carboxylic group. In Desulfotalea psychrophila (strain LSv54 / DSM 12343), this protein is Cobalamin biosynthesis protein CobD.